The primary structure comprises 524 residues: Coronin-2A (524 aa).

5 WD repeats span residues 80–120 (GHRG…LTRN), 130–170 (GHAR…SVIA), 178–217 (CHQD…VLQE), 220–263 (YKGH…VPLT), and 269–308 (GSSG…PHLT). A disordered region spans residues 403–436 (LLDSQTLPPERPLSNSMVQVSPQPLEPMKQPAED). Residues 404–424 (LDSQTLPPERPLSNSMVQVSP) show a composition bias toward polar residues. The stretch at 484 to 523 (QMFYRQQEEIRRLRELLIQREVQTKQLELEIKNLRMALGQ) forms a coiled coil.

This sequence belongs to the WD repeat coronin family. Binds actin. Component of the N-Cor repressor complex, at least composed of NCOR1, NCOR2, HDAC3, TBL1X, TBL1R, CORO2A and GPS2.

The chain is Coronin-2A (Coro2a) from Mus musculus (Mouse).